The chain runs to 67 residues: Large ribosomal subunit protein uL29 (67 aa).

The protein belongs to the universal ribosomal protein uL29 family.

This Methanosarcina mazei (strain ATCC BAA-159 / DSM 3647 / Goe1 / Go1 / JCM 11833 / OCM 88) (Methanosarcina frisia) protein is Large ribosomal subunit protein uL29.